The chain runs to 486 residues: N-succinylglutamate 5-semialdehyde dehydrogenase (486 aa).

220 to 225 (GSSRTG) serves as a coordination point for NAD(+). Residues E243 and C277 contribute to the active site.

It belongs to the aldehyde dehydrogenase family. AstD subfamily.

The catalysed reaction is N-succinyl-L-glutamate 5-semialdehyde + NAD(+) + H2O = N-succinyl-L-glutamate + NADH + 2 H(+). It participates in amino-acid degradation; L-arginine degradation via AST pathway; L-glutamate and succinate from L-arginine: step 4/5. Its function is as follows. Catalyzes the NAD-dependent reduction of succinylglutamate semialdehyde into succinylglutamate. This Shewanella halifaxensis (strain HAW-EB4) protein is N-succinylglutamate 5-semialdehyde dehydrogenase.